We begin with the raw amino-acid sequence, 219 residues long: Tetratricopeptide repeat protein 9A (219 aa).

A disordered region spans residues 1 to 49; sequence MERKGLAARSSGNPSPPALGEGPRPVPPPCVPSGGGAPERGQAGTAAEP. Residues 56–89 form a TPR 1 repeat; the sequence is AHEFKSQGAQCYKDKKFREAIGKYHRALLELKGL. The disordered stretch occupies residues 94 to 115; the sequence is EERDARPASSAGVPKSSRLSEE. The residue at position 102 (serine 102) is a Phosphoserine. 2 TPR repeats span residues 125–160 and 161–194; these read IDCY…EGEN and FKAL…QPTD.

It belongs to the TTC9 family.

The polypeptide is Tetratricopeptide repeat protein 9A (Ttc9) (Mus musculus (Mouse)).